The primary structure comprises 563 residues: Sulfite reductase [NADPH] hemoprotein beta-component (563 aa).

[4Fe-4S] cluster is bound by residues Cys427, Cys433, Cys472, and Cys476. Cys476 provides a ligand contact to siroheme.

This sequence belongs to the nitrite and sulfite reductase 4Fe-4S domain family. Alpha(8)-beta(8). The alpha component is a flavoprotein, the beta component is a hemoprotein. Requires siroheme as cofactor. The cofactor is [4Fe-4S] cluster.

It catalyses the reaction hydrogen sulfide + 3 NADP(+) + 3 H2O = sulfite + 3 NADPH + 4 H(+). The protein operates within sulfur metabolism; hydrogen sulfide biosynthesis; hydrogen sulfide from sulfite (NADPH route): step 1/1. Functionally, component of the sulfite reductase complex that catalyzes the 6-electron reduction of sulfite to sulfide. This is one of several activities required for the biosynthesis of L-cysteine from sulfate. In Shewanella frigidimarina (strain NCIMB 400), this protein is Sulfite reductase [NADPH] hemoprotein beta-component.